We begin with the raw amino-acid sequence, 276 residues long: Protease HtpX homolog (276 aa).

The chain crosses the membrane as a helical span at residues 16–36 (LFIWFGGMIAGQTGMVIAFLV). Histidine 130 lines the Zn(2+) pocket. The active site involves glutamate 131. Zn(2+) is bound at residue histidine 134. Helical transmembrane passes span 142 to 162 (IGTV…FGMF) and 173 to 193 (IFVM…IQMT). Position 199 (glutamate 199) interacts with Zn(2+).

This sequence belongs to the peptidase M48B family. The cofactor is Zn(2+).

It localises to the cell inner membrane. This Sulfurovum sp. (strain NBC37-1) protein is Protease HtpX homolog.